Consider the following 1381-residue polypeptide: Hepatocyte growth factor receptor (1381 aa).

A signal peptide spans 1–24 (MKAPAVLAPGILMLLFTLVQRSNG). At 25 to 932 (ECKEALAKSE…VIVQPDQNFT (908 aa)) the chain is on the extracellular side. One can recognise a Sema domain in the interval 27 to 515 (KEALAKSEMN…TGKKITKIPL (489 aa)). N-linked (GlcNAc...) asparagine glycosylation occurs at N45. Disulfide bonds link C95-C101, C98-C160, C133-C141, and C172-C175. An N-linked (GlcNAc...) asparagine glycan is attached at N106. A glycan (N-linked (GlcNAc...) asparagine) is linked at N149. The N-linked (GlcNAc...) asparagine glycan is linked to N202. Disulfide bonds link C298-C363 and C385-C397. Residues N399 and N405 are each glycosylated (N-linked (GlcNAc...) asparagine). Cystine bridges form between C520/C538, C526/C561, C529/C545, and C541/C551. IPT/TIG domains lie at 563–655 (PAIY…FSYV), 657–739 (PIIT…FSYR), and 742–836 (PIVY…LIYV). O-linked (Man) threonine glycosylation is present at T582. N-linked (GlcNAc...) asparagine glycosylation is found at N607 and N635. Residues T676 and T761 are each glycosylated (O-linked (Man) threonine). 3 N-linked (GlcNAc...) asparagine glycosylation sites follow: N785, N879, and N930. A helical transmembrane segment spans residues 933-955 (GLIAGVVSISIALLLLLGLFLWL). Topologically, residues 956 to 1381 (KKRKQIKDLG…EDNADDEVDT (426 aa)) are cytoplasmic. S966 bears the Phosphoserine mark. The residue at position 977 (T977) is a Phosphothreonine. A phosphoserine mark is found at S990, S997, and S1000. A Phosphotyrosine modification is found at Y1003. One can recognise a Protein kinase domain in the interval 1078–1345 (VHFNEVIGRG…RISAIFSTFI (268 aa)). Residues 1084–1092 (IGRGHFGCV) and K1110 each bind ATP. The active-site Proton acceptor is D1204. The tract at residues 1212 to 1381 (LDEKFTVKVA…EDNADDEVDT (170 aa)) is interaction with RANBP9. Phosphotyrosine is present on Y1230. 2 positions are modified to phosphotyrosine; by autocatalysis: Y1234 and Y1235. Phosphothreonine is present on T1289. The tract at residues 1320–1359 (WHPKAEMRPSFSELVSRISAIFSTFIGEHYVHVNATYVNV) is interaction with MUC20. Residues Y1349 and Y1356 each carry the phosphotyrosine; by autocatalysis modification. Y1365 carries the post-translational modification Phosphotyrosine.

Belongs to the protein kinase superfamily. Tyr protein kinase family. Heterodimer made of an alpha chain (50 kDa) and a beta chain (145 kDa) which are disulfide linked. Binds PLXNB1. Interacts when phosphorylated with downstream effectors including STAT3, PIK3R1, SRC, PCLG1, GRB2 and GAB1. Interacts with SPSB1, SPSB2 and SPSB4. Interacts with INPP5D/SHIP1. When phosphorylated at Tyr-1356, interacts with INPPL1/SHIP2. Interacts with RANBP9 and RANBP10, as well as SPSB1, SPSB2, SPSB3 and SPSB4. SPSB1 binding occurs in the presence and in the absence of HGF, however HGF treatment has a positive effect on this interaction. Interacts with MUC20; prevents interaction with GRB2 and suppresses hepatocyte growth factor-induced cell proliferation. Interacts with GRB10. Interacts with PTPN1 and PTPN2. Interacts with HSP90AA1 and HSP90AB1; the interaction suppresses MET kinase activity. Interacts with tensin TNS3. Interacts (when phosphorylated) with tensin TNS4 (via SH2 domain); the interaction increases MET protein stability by inhibiting MET endocytosis and subsequent lysosomal degradation. In terms of assembly, (Microbial infection) Immunoprecipitates with L.monocytogenes InlB. InlB probably dimerizes upon binding to MET, which encourages subsequent dimerization of MET. In terms of processing, autophosphorylated in response to ligand binding on Tyr-1234 and Tyr-1235 in the kinase domain leading to further phosphorylation of Tyr-1349 and Tyr-1356 in the C-terminal multifunctional docking site. Dephosphorylated by PTPRJ at Tyr-1349 and Tyr-1365. Dephosphorylated by PTPN1 and PTPN2. Post-translationally, ubiquitinated. Ubiquitination by CBL regulates the receptor stability and activity through proteasomal degradation. O-mannosylation of IPT/TIG domains by TMEM260 is required for protein maturation. O-mannosylated residues are composed of single mannose glycans that are not elongated or modified. In terms of processing, (Microbial infection) Tyrosine phosphorylation is stimulated by L.monocytogenes InlB.

It is found in the membrane. It catalyses the reaction L-tyrosyl-[protein] + ATP = O-phospho-L-tyrosyl-[protein] + ADP + H(+). Its activity is regulated as follows. In its inactive state, the C-terminal tail interacts with the catalytic domain and inhibits the kinase activity. Upon ligand binding, the C-terminal tail is displaced and becomes phosphorylated, thus increasing the kinase activity. Receptor tyrosine kinase that transduces signals from the extracellular matrix into the cytoplasm by binding to hepatocyte growth factor/HGF ligand. Regulates many physiological processes including proliferation, scattering, morphogenesis and survival. Ligand binding at the cell surface induces autophosphorylation of MET on its intracellular domain that provides docking sites for downstream signaling molecules. Following activation by ligand, interacts with the PI3-kinase subunit PIK3R1, PLCG1, SRC, GRB2, STAT3 or the adapter GAB1. Recruitment of these downstream effectors by MET leads to the activation of several signaling cascades including the RAS-ERK, PI3 kinase-AKT, or PLCgamma-PKC. The RAS-ERK activation is associated with the morphogenetic effects while PI3K/AKT coordinates prosurvival effects. During embryonic development, MET signaling plays a role in gastrulation, development and migration of muscles and neuronal precursors, angiogenesis and kidney formation. In adults, participates in wound healing as well as organ regeneration and tissue remodeling. Also promotes differentiation and proliferation of hematopoietic cells. In terms of biological role, (Microbial infection) Acts as a receptor for Listeria monocytogenes internalin InlB, mediating entry of the pathogen into cells. This chain is Hepatocyte growth factor receptor (MET), found in Chlorocebus aethiops (Green monkey).